A 664-amino-acid polypeptide reads, in one-letter code: MTPTPDAPAAADAATGAGWLARRRGALARVALAPVAQAIGRVERVADGIAFVSGLEDTMLNEVLRFEGGVTGFAHTLDEDLISVVLLDPDAGVRAQTAVARTGAVLEVPAGPQLLGRVVDPLGRPLDGGAPLDAAHTLPIERAAPAIIERDLVSEPLDTGVLIVDALFTIGRGQRELIIGDRATGKTSLAIDAIVNQRHSDVICVYVAIGQRASAVRRVIDAVRRYGAPERCVFVVAPAACAPGLQWIAPFAGFSIAEYFRDRGQHALVVVDDLTKHAATHRELALLTREPPGREAYPGDIFYVHARLLERAAKLSAALGGGSLSALPIAETDAGNLAAYIPTNLISITDGQIVLDSALFAANQRPAVDVGLSVSRVGGKAQHPALRAASGRLRLDYAQFLELEAFTRFGGLTDARLRAQITRGERIRALITQPRFRALRTLDEVVLLKALAAGALDAMSPDLVAPLRERLPAWLDARIAALTPALAPPRDWLADDAALDALAESVGELIERIAADAARRATAGMPAEDAAGDIGGAFGGEQARGDADRDADHGANREVSREVSPEASREVSREVSCEVSHEADRDAAADAARVAGRAPGRAEPDRAAPRAMPDGPPRAQADGDRASASRPRPDARGDAARTAPSPQGGADANVDAEAEARHKR.

Residue 180–187 (GDRATGKT) participates in ATP binding. The segment at 525–664 (MPAEDAAGDI…DAEAEARHKR (140 aa)) is disordered. Basic and acidic residues predominate over residues 543–588 (ARGDADRDADHGANREVSREVSPEASREVSREVSCEVSHEADRDAA). Residues 589-599 (ADAARVAGRAP) are compositionally biased toward low complexity. A compositionally biased stretch (basic and acidic residues) spans 621–639 (ADGDRASASRPRPDARGDA).

This sequence belongs to the ATPase alpha/beta chains family. F-type ATPases have 2 components, CF(1) - the catalytic core - and CF(0) - the membrane proton channel. CF(1) has five subunits: alpha(3), beta(3), gamma(1), delta(1), epsilon(1). CF(0) has three main subunits: a(1), b(2) and c(9-12). The alpha and beta chains form an alternating ring which encloses part of the gamma chain. CF(1) is attached to CF(0) by a central stalk formed by the gamma and epsilon chains, while a peripheral stalk is formed by the delta and b chains.

The protein resides in the cell inner membrane. The enzyme catalyses ATP + H2O + 4 H(+)(in) = ADP + phosphate + 5 H(+)(out). In terms of biological role, produces ATP from ADP in the presence of a proton gradient across the membrane. The alpha chain is a regulatory subunit. This is ATP synthase subunit alpha 2 from Burkholderia pseudomallei (strain 1710b).